The sequence spans 370 residues: Capsular polysaccharide phosphotransferase (370 aa).

It belongs to the stealth family.

Part of a capsular polysaccharide synthesis locus. The sequence is that of Capsular polysaccharide phosphotransferase from Actinobacillus suis.